The following is a 293-amino-acid chain: ELMO domain-containing protein 2 (293 aa).

An ELMO domain is found at 126 to 282 (QHEELLMKLW…KFHEKIKGLL (157 aa)).

In terms of tissue distribution, alveolar cells (morphologically type II cells) and alveolar macrophages (at protein level). Expressed in brain, colon, heart, kidney, liver, lung, muscle, placenta, small intestine, spleen, stomach and testis. In lung it is expressed in alveolar macrophages and alveolar walls.

Acts as a GTPase-activating protein (GAP) toward guanine nucleotide exchange factors like ARL2, ARL3, ARF1 and ARF6, but not for GTPases outside the Arf family. Regulates IFN-related antiviral responses. The protein is ELMO domain-containing protein 2 (ELMOD2) of Homo sapiens (Human).